The primary structure comprises 142 residues: Large ribosomal subunit protein uL13 (142 aa).

Belongs to the universal ribosomal protein uL13 family. Part of the 50S ribosomal subunit.

In terms of biological role, this protein is one of the early assembly proteins of the 50S ribosomal subunit, although it is not seen to bind rRNA by itself. It is important during the early stages of 50S assembly. This chain is Large ribosomal subunit protein uL13, found in Thioalkalivibrio sulfidiphilus (strain HL-EbGR7).